Here is a 353-residue protein sequence, read N- to C-terminus: MSEPLKPRIDFAEPLKEEPTSAFKAQQTFSEAESHTFAPAAIDERPEDEGVAEAAVDAALRPKRSLWRKMVMGGLALFGASVVGQGVQWTMNAWQTQDWVALGGCAAGALIVGAGVGSVVTEWWRLWRLRQRAHERDEARELLHSHSVVKGRAFCEKLAQQAGIDQSHPALQRWYAAIHETQNDREIVGLYAHLVQPVLDAQARREISRFAAESTLMIAVSPLALVDMAFIAWRNLRLINRIATLYGIELGYYSRLRLFRLVLLNIAFAGASELVREVGMDWMSQDLAARLSTRAAQGIGAGLLTARLGIKAMELCRPLPWADNDKPRLGDFRRQLIGQLKETLQKSKSSPEK.

Basic and acidic residues predominate over residues 1-19; the sequence is MSEPLKPRIDFAEPLKEEP. Positions 1–48 are disordered; it reads MSEPLKPRIDFAEPLKEEPTSAFKAQQTFSEAESHTFAPAAIDERPED. Residues 1 to 69 are Periplasmic-facing; the sequence is MSEPLKPRID…LRPKRSLWRK (69 aa). The helical transmembrane segment at 70-90 threads the bilayer; the sequence is MVMGGLALFGASVVGQGVQWT. Residues 91-99 lie on the Cytoplasmic side of the membrane; the sequence is MNAWQTQDW. The chain crosses the membrane as a helical span at residues 100 to 120; the sequence is VALGGCAAGALIVGAGVGSVV. Topologically, residues 121–212 are periplasmic; sequence TEWWRLWRLR…ARREISRFAA (92 aa). Residues 213–233 form a helical membrane-spanning segment; it reads ESTLMIAVSPLALVDMAFIAW. Over 234-353 the chain is Cytoplasmic; it reads RNLRLINRIA…LQKSKSSPEK (120 aa).

Belongs to the UPF0283 family.

The protein resides in the cell inner membrane. This chain is UPF0283 membrane protein YcjF (ycjF), found in Salmonella typhi.